Consider the following 183-residue polypeptide: GMP synthase [glutamine-hydrolyzing] subunit A (183 aa).

In terms of domain architecture, Glutamine amidotransferase type-1 spans 3–183 (HILVVDNHGQ…VFENFVAICE (181 aa)). The active-site Nucleophile is Cys74. Active-site residues include His162 and Glu164.

As to quaternary structure, heterodimer composed of a glutamine amidotransferase subunit (A) and a GMP-binding subunit (B).

The enzyme catalyses XMP + L-glutamine + ATP + H2O = GMP + L-glutamate + AMP + diphosphate + 2 H(+). Its pathway is purine metabolism; GMP biosynthesis; GMP from XMP (L-Gln route): step 1/1. In terms of biological role, catalyzes the synthesis of GMP from XMP. This Halobacterium salinarum (strain ATCC 700922 / JCM 11081 / NRC-1) (Halobacterium halobium) protein is GMP synthase [glutamine-hydrolyzing] subunit A.